The sequence spans 146 residues: U-scoloptoxin(16)-Er1a (146 aa).

Positions 1–26 are cleaved as a signal peptide; it reads MNTVSVVQFLAVGCAVFVLYGRGVFA.

This sequence belongs to the scoloptoxin-16 family. In terms of processing, contains 4 disulfide bonds. In terms of tissue distribution, expressed by the venom gland.

The protein resides in the secreted. In Ethmostigmus rubripes (Giant centipede), this protein is U-scoloptoxin(16)-Er1a.